The chain runs to 266 residues: 4-hydroxy-tetrahydrodipicolinate reductase (266 aa).

10-15 (GPRGRM) lines the NAD(+) pocket. Residue K38 coordinates NADP(+). NAD(+)-binding positions include 99–101 (GTT) and 125–128 (APNF). The active-site Proton donor/acceptor is the H155. H156 contributes to the (S)-2,3,4,5-tetrahydrodipicolinate binding site. K159 functions as the Proton donor in the catalytic mechanism. 165–166 (GT) serves as a coordination point for (S)-2,3,4,5-tetrahydrodipicolinate.

The protein belongs to the DapB family.

The protein resides in the cytoplasm. It catalyses the reaction (S)-2,3,4,5-tetrahydrodipicolinate + NAD(+) + H2O = (2S,4S)-4-hydroxy-2,3,4,5-tetrahydrodipicolinate + NADH + H(+). It carries out the reaction (S)-2,3,4,5-tetrahydrodipicolinate + NADP(+) + H2O = (2S,4S)-4-hydroxy-2,3,4,5-tetrahydrodipicolinate + NADPH + H(+). Its pathway is amino-acid biosynthesis; L-lysine biosynthesis via DAP pathway; (S)-tetrahydrodipicolinate from L-aspartate: step 4/4. In terms of biological role, catalyzes the conversion of 4-hydroxy-tetrahydrodipicolinate (HTPA) to tetrahydrodipicolinate. The polypeptide is 4-hydroxy-tetrahydrodipicolinate reductase (Bacillus mycoides (strain KBAB4) (Bacillus weihenstephanensis)).